We begin with the raw amino-acid sequence, 251 residues long: GTP cyclohydrolase 1 type 2 homolog (251 aa).

5 residues coordinate a divalent metal cation: His-63, His-64, Asp-101, His-219, and Glu-223.

It belongs to the GTP cyclohydrolase I type 2/NIF3 family. As to quaternary structure, homohexamer.

The sequence is that of GTP cyclohydrolase 1 type 2 homolog from Pasteurella multocida (strain Pm70).